The primary structure comprises 418 residues: Gamma-glutamyl phosphate reductase (418 aa).

This sequence belongs to the gamma-glutamyl phosphate reductase family.

Its subcellular location is the cytoplasm. It catalyses the reaction L-glutamate 5-semialdehyde + phosphate + NADP(+) = L-glutamyl 5-phosphate + NADPH + H(+). It participates in amino-acid biosynthesis; L-proline biosynthesis; L-glutamate 5-semialdehyde from L-glutamate: step 2/2. In terms of biological role, catalyzes the NADPH-dependent reduction of L-glutamate 5-phosphate into L-glutamate 5-semialdehyde and phosphate. The product spontaneously undergoes cyclization to form 1-pyrroline-5-carboxylate. This Desulfosudis oleivorans (strain DSM 6200 / JCM 39069 / Hxd3) (Desulfococcus oleovorans) protein is Gamma-glutamyl phosphate reductase.